Reading from the N-terminus, the 745-residue chain is Polyribonucleotide nucleotidyltransferase (745 aa).

Asp487 and Asp493 together coordinate Mg(2+). The KH domain occupies 554–613 (PSTTTIKIDKDKIRDIIGPGGKVIKEICEISGAKIDISDDGTVSIYASDRDKLKVALDKI). Residues 623 to 691 (GEIFNGTVMK…NKGKAKLTIK (69 aa)) form the S1 motif domain. Residues 691 to 745 (KNADKDKSSNNTKPKTNAKDNSEPEQRRDSSKKRAWNEDNNAETAEVITERKYFN) are disordered. A compositionally biased stretch (basic and acidic residues) spans 707–719 (NAKDNSEPEQRRD).

The protein belongs to the polyribonucleotide nucleotidyltransferase family. Requires Mg(2+) as cofactor.

The protein localises to the cytoplasm. It catalyses the reaction RNA(n+1) + phosphate = RNA(n) + a ribonucleoside 5'-diphosphate. Its function is as follows. Involved in mRNA degradation. Catalyzes the phosphorolysis of single-stranded polyribonucleotides processively in the 3'- to 5'-direction. This Rickettsia massiliae (strain Mtu5) protein is Polyribonucleotide nucleotidyltransferase.